The chain runs to 131 residues: D-ribose pyranase (131 aa).

The active-site Proton donor is the His20. Substrate is bound by residues Asp28, His98, and 120–122 (YAN).

It belongs to the RbsD / FucU family. RbsD subfamily. In terms of assembly, homodecamer.

It is found in the cytoplasm. It carries out the reaction beta-D-ribopyranose = beta-D-ribofuranose. The protein operates within carbohydrate metabolism; D-ribose degradation; D-ribose 5-phosphate from beta-D-ribopyranose: step 1/2. Functionally, catalyzes the interconversion of beta-pyran and beta-furan forms of D-ribose. This chain is D-ribose pyranase, found in Symbiobacterium thermophilum (strain DSM 24528 / JCM 14929 / IAM 14863 / T).